A 484-amino-acid polypeptide reads, in one-letter code: Pentatricopeptide repeat-containing protein At1g09190 (484 aa).

PPR repeat units lie at residues 66-100, 101-135, 136-166, 167-197, 198-232, 233-267, 269-299, 300-334, 336-366, and 372-406; these read NVLV…GIWA, DEYT…GFHR, LGKI…MSER, NVVV…MSER, SIVS…GFDP, DEAT…GLFK, FITV…MQRR, NVVS…GKVA, NEAT…MMER, and RTEH…ANAA. Positions 407-482 are type E motif; that stretch reads MWGSLLSACR…STGQSTICDV (76 aa).

The protein belongs to the PPR family. PCMP-E subfamily.

In Arabidopsis thaliana (Mouse-ear cress), this protein is Pentatricopeptide repeat-containing protein At1g09190 (PCMP-E70).